The chain runs to 281 residues: NAD kinase (281 aa).

Catalysis depends on D66, which acts as the Proton acceptor. Residues 66–67 (DG), 137–138 (ND), R148, R165, D167, and 178–183 (TAYSMS) each bind NAD(+).

The protein belongs to the NAD kinase family. A divalent metal cation is required as a cofactor.

Its subcellular location is the cytoplasm. The enzyme catalyses NAD(+) + ATP = ADP + NADP(+) + H(+). In terms of biological role, involved in the regulation of the intracellular balance of NAD and NADP, and is a key enzyme in the biosynthesis of NADP. Catalyzes specifically the phosphorylation on 2'-hydroxyl of the adenosine moiety of NAD to yield NADP. This is NAD kinase from Chlorobium phaeovibrioides (strain DSM 265 / 1930) (Prosthecochloris vibrioformis (strain DSM 265)).